A 135-amino-acid chain; its full sequence is NAD(P)H-quinone oxidoreductase subunit 3 (135 aa).

A run of 3 helical transmembrane segments spans residues 15–35 (IVFFLSGYEYFLGFLMISSLV), 79–99 (MFALVFVIFDVETVFLYPWAV), and 104–124 (LGLLAFIEALIFIAILVVALV).

It belongs to the complex I subunit 3 family. NDH-1 can be composed of about 15 different subunits; different subcomplexes with different compositions have been identified which probably have different functions.

Its subcellular location is the cellular thylakoid membrane. The enzyme catalyses a plastoquinone + NADH + (n+1) H(+)(in) = a plastoquinol + NAD(+) + n H(+)(out). It carries out the reaction a plastoquinone + NADPH + (n+1) H(+)(in) = a plastoquinol + NADP(+) + n H(+)(out). Functionally, NDH-1 shuttles electrons from an unknown electron donor, via FMN and iron-sulfur (Fe-S) centers, to quinones in the respiratory and/or the photosynthetic chain. The immediate electron acceptor for the enzyme in this species is believed to be plastoquinone. Couples the redox reaction to proton translocation, and thus conserves the redox energy in a proton gradient. Cyanobacterial NDH-1 also plays a role in inorganic carbon-concentration. In Trichodesmium erythraeum (strain IMS101), this protein is NAD(P)H-quinone oxidoreductase subunit 3.